The sequence spans 188 residues: Pyridoxal 5'-phosphate synthase subunit PdxT (188 aa).

47 to 49 (GES) contributes to the L-glutamine binding site. Catalysis depends on Cys-79, which acts as the Nucleophile. Residues Arg-106 and 134–135 (IR) contribute to the L-glutamine site. Active-site charge relay system residues include His-169 and Glu-171.

This sequence belongs to the glutaminase PdxT/SNO family. As to quaternary structure, in the presence of PdxS, forms a dodecamer of heterodimers. Only shows activity in the heterodimer.

It catalyses the reaction aldehydo-D-ribose 5-phosphate + D-glyceraldehyde 3-phosphate + L-glutamine = pyridoxal 5'-phosphate + L-glutamate + phosphate + 3 H2O + H(+). The catalysed reaction is L-glutamine + H2O = L-glutamate + NH4(+). It functions in the pathway cofactor biosynthesis; pyridoxal 5'-phosphate biosynthesis. Catalyzes the hydrolysis of glutamine to glutamate and ammonia as part of the biosynthesis of pyridoxal 5'-phosphate. The resulting ammonia molecule is channeled to the active site of PdxS. This Caldicellulosiruptor saccharolyticus (strain ATCC 43494 / DSM 8903 / Tp8T 6331) protein is Pyridoxal 5'-phosphate synthase subunit PdxT.